The chain runs to 75 residues: Small ribosomal subunit protein bS18 (75 aa).

Belongs to the bacterial ribosomal protein bS18 family. As to quaternary structure, part of the 30S ribosomal subunit. Forms a tight heterodimer with protein bS6.

In terms of biological role, binds as a heterodimer with protein bS6 to the central domain of the 16S rRNA, where it helps stabilize the platform of the 30S subunit. The chain is Small ribosomal subunit protein bS18 from Cereibacter sphaeroides (strain ATCC 17029 / ATH 2.4.9) (Rhodobacter sphaeroides).